A 472-amino-acid chain; its full sequence is MRFLFFLFVAVVHLFSLGSGKAIYKSGVSQRTFQEIKEEIANYEDVAKAIINLAVYGKYQNRSYERLGLLVDTVGPRLSGSKNLEKAIQIMYQNLQQDGLENVHLEQVRIPHWERGEESAVMVVPRIHKLAILGLGGSIGTPPEGITAEVLVVASFVELQRRASEARGKIVVYNQPYTDYGKTVQYRERGAVEAAKVGAVASLIRSVASFSIYSPHTGHQGYQDGVPKIPTACITIEDAEMMSRMASRGDKIVIHLKMGAKTYPDTDSFNTVAEITGSKYPEEVVLVSGHLDSWDVGQGALDDGGGAFISWEALSLVKDLGLRPKRTLRLVLWTAEEQGGVGASQYYELHKANISKYSLVMEADSGTFLPTGLQFTGSDKARAIMKEVMSLLQPLNITKVFNDAEGTDINFWIQAGVPGASLRDDLYKYFFFHHSHGDTMTAMDPKQMNVAAAVWAVVAYVVADMEEMLPRS.

The first 20 residues, 1–20 (MRFLFFLFVAVVHLFSLGSG), serve as a signal peptide directing secretion. A propeptide spanning residues 21 to 44 (KAIYKSGVSQRTFQEIKEEIANYE) is cleaved from the precursor. Asn61 carries N-linked (GlcNAc...) asparagine glycosylation. Zn(2+)-binding residues include His290 and Asp302. Glu336 functions as the Nucleophile in the catalytic mechanism. Glu337 lines the Zn(2+) pocket. Asn353 carries an N-linked (GlcNAc...) asparagine glycan. A Zn(2+)-binding site is contributed by Asp364. A glycan (N-linked (GlcNAc...) asparagine) is linked at Asn396. His434 provides a ligand contact to Zn(2+).

It belongs to the peptidase M28 family. In terms of assembly, homodimer. The monomeric form is inactive while the homodimer is active. Post-translationally, N-glycosylated. The secreted form is modified by hybrid or complex type oligosaccharide chains.

The protein resides in the endoplasmic reticulum. The protein localises to the golgi apparatus. Its subcellular location is the lysosome. It is found in the secreted. Functionally, carboxypeptidase that may play an important role in the hydrolysis of circulating peptides. Catalyzes the hydrolysis of dipeptides with unsubstituted terminals into amino acids. May play a role in the liberation of thyroxine hormone from its thyroglobulin (Tg) precursor. In Rattus norvegicus (Rat), this protein is Carboxypeptidase Q (Cpq).